The following is a 130-amino-acid chain: Immunoglobulin kappa chain variable 9-120 (130 aa).

Positions 1–22 (MDMRAPAQIFGFLLLLFQGTRC) are cleaved as a signal peptide. Residues 23–45 (DIQMTQSPSSLSASLGERVSLTC) are framework-1. A disulfide bridge links C45 with C110. The complementarity-determining-1 stretch occupies residues 46–56 (RASQDIGSSLN). Residues 57 to 71 (WLQQEPDGTIKRLIY) are framework-2. The interval 72–78 (ATSSLDS) is complementarity-determining-2. The interval 79-110 (GVPKRFSGSRSGSDYSLTISSLESEDFVDYYC) is framework-3. Positions 111 to 119 (LQYASSPWT) are complementarity-determining-3. Residues 120-129 (FGGGTKLEIK) form a framework-4 region.

The sequence is that of Immunoglobulin kappa chain variable 9-120 from Mus musculus (Mouse).